A 337-amino-acid chain; its full sequence is Quinolinate synthase (337 aa).

Iminosuccinate is bound by residues H40 and S57. C102 contacts [4Fe-4S] cluster. Iminosuccinate is bound by residues 128 to 130 (YVN) and S145. Residue C189 coordinates [4Fe-4S] cluster. Residues 215–217 (HPE) and T243 each bind iminosuccinate. C288 provides a ligand contact to [4Fe-4S] cluster.

This sequence belongs to the quinolinate synthase family. Type 2 subfamily. Requires [4Fe-4S] cluster as cofactor.

The protein resides in the cytoplasm. It catalyses the reaction iminosuccinate + dihydroxyacetone phosphate = quinolinate + phosphate + 2 H2O + H(+). It functions in the pathway cofactor biosynthesis; NAD(+) biosynthesis; quinolinate from iminoaspartate: step 1/1. Catalyzes the condensation of iminoaspartate with dihydroxyacetone phosphate to form quinolinate. In Mycobacterium sp. (strain JLS), this protein is Quinolinate synthase.